The following is a 364-amino-acid chain: Dermonecrotic toxin SPH (364 aa).

Positions 1 to 17 (MIRIFALITALAITVKC) are cleaved as a signal peptide. Residue His-29 is the Nucleophile of the active site. Mg(2+)-binding residues include Glu-49 and Asp-51. His-65 is a catalytic residue. Intrachain disulfides connect Cys-69/Cys-75 and Cys-71/Cys-215. Asp-109 contacts Mg(2+).

Belongs to the arthropod phospholipase D family. The cofactor is Mg(2+). Expressed in salivary glands.

It is found in the secreted. The enzyme catalyses an N-(acyl)-sphingosylphosphocholine = an N-(acyl)-sphingosyl-1,3-cyclic phosphate + choline. It carries out the reaction an N-(acyl)-sphingosylphosphoethanolamine = an N-(acyl)-sphingosyl-1,3-cyclic phosphate + ethanolamine. The catalysed reaction is a 1-acyl-sn-glycero-3-phosphocholine = a 1-acyl-sn-glycero-2,3-cyclic phosphate + choline. It catalyses the reaction a 1-acyl-sn-glycero-3-phosphoethanolamine = a 1-acyl-sn-glycero-2,3-cyclic phosphate + ethanolamine. Dermonecrotic toxins cleave the phosphodiester linkage between the phosphate and headgroup of certain phospholipids (sphingolipid and lysolipid substrates), forming an alcohol (often choline) and a cyclic phosphate. Acts on sphingomyelin (SM). It may also act on ceramide phosphoethanolamine (CPE), lysophosphatidylcholine (LPC) and lysophosphatidylethanolamine (LPE), but not on lysophosphatidylserine (LPS), and lysophosphatidylglycerol (LPG). It acts by transphosphatidylation, releasing exclusively cyclic phosphate products as second products. Induces dermonecrosis, hemolysis, increased vascular permeability, edema, inflammatory response, and platelet aggregation. The sequence is that of Dermonecrotic toxin SPH (SPH) from Ixodes scapularis (Black-legged tick).